Consider the following 475-residue polypeptide: Ribulose bisphosphate carboxylase large chain (475 aa).

Residues Met-1 to Ser-2 constitute a propeptide that is removed on maturation. Pro-3 bears the N-acetylproline mark. Position 14 is an N6,N6,N6-trimethyllysine (Lys-14). Substrate-binding residues include Asn-123 and Thr-173. Lys-175 (proton acceptor) is an active-site residue. Lys-177 lines the substrate pocket. Mg(2+) contacts are provided by Lys-201, Asp-203, and Glu-204. At Lys-201 the chain carries N6-carboxylysine. Catalysis depends on His-294, which acts as the Proton acceptor. Arg-295, His-327, and Ser-379 together coordinate substrate.

Belongs to the RuBisCO large chain family. Type I subfamily. As to quaternary structure, heterohexadecamer of 8 large chains and 8 small chains; disulfide-linked. The disulfide link is formed within the large subunit homodimers. It depends on Mg(2+) as a cofactor. In terms of processing, the disulfide bond which can form in the large chain dimeric partners within the hexadecamer appears to be associated with oxidative stress and protein turnover.

The protein resides in the plastid. It localises to the chloroplast. It catalyses the reaction 2 (2R)-3-phosphoglycerate + 2 H(+) = D-ribulose 1,5-bisphosphate + CO2 + H2O. The catalysed reaction is D-ribulose 1,5-bisphosphate + O2 = 2-phosphoglycolate + (2R)-3-phosphoglycerate + 2 H(+). Functionally, ruBisCO catalyzes two reactions: the carboxylation of D-ribulose 1,5-bisphosphate, the primary event in carbon dioxide fixation, as well as the oxidative fragmentation of the pentose substrate in the photorespiration process. Both reactions occur simultaneously and in competition at the same active site. The polypeptide is Ribulose bisphosphate carboxylase large chain (Bouvardia ternifolia (Firecrackerbush)).